Reading from the N-terminus, the 225-residue chain is E3 ubiquitin-protein ligase ATL76 (225 aa).

A helical transmembrane segment spans residues 59–79 (LMLLSVLICGIICCLGLHYII). The RING-type; atypical zinc-finger motif lies at 135–177 (CVICLSDFVSGEQLRLLPKCNHGFHVRCIDKWLQHHLTCPKCR).

Belongs to the RING-type zinc finger family. ATL subfamily.

It is found in the membrane. It catalyses the reaction S-ubiquitinyl-[E2 ubiquitin-conjugating enzyme]-L-cysteine + [acceptor protein]-L-lysine = [E2 ubiquitin-conjugating enzyme]-L-cysteine + N(6)-ubiquitinyl-[acceptor protein]-L-lysine.. It participates in protein modification; protein ubiquitination. Its function is as follows. E3 ubiquitin-protein ligase able to catalyze polyubiquitination with ubiquitin-conjugating enzyme E2 UBC8 in vitro. This chain is E3 ubiquitin-protein ligase ATL76 (ATL76), found in Arabidopsis thaliana (Mouse-ear cress).